The following is a 154-amino-acid chain: Myoglobin (154 aa).

The 147-residue stretch at 2-148 folds into the Globin domain; it reads GLSDGEWQLV…FRKDMASNYK (147 aa). Ser-4 carries the phosphoserine modification. His-65 contacts nitrite. Position 65 (His-65) interacts with O2. Position 68 is a phosphothreonine (Thr-68). His-94 lines the heme b pocket.

This sequence belongs to the globin family. In terms of assembly, monomeric.

The protein resides in the cytoplasm. Its subcellular location is the sarcoplasm. It carries out the reaction Fe(III)-heme b-[protein] + nitric oxide + H2O = Fe(II)-heme b-[protein] + nitrite + 2 H(+). It catalyses the reaction H2O2 + AH2 = A + 2 H2O. Its function is as follows. Monomeric heme protein which primary function is to store oxygen and facilitate its diffusion within muscle tissues. Reversibly binds oxygen through a pentacoordinated heme iron and enables its timely and efficient release as needed during periods of heightened demand. Depending on the oxidative conditions of tissues and cells, and in addition to its ability to bind oxygen, it also has a nitrite reductase activity whereby it regulates the production of bioactive nitric oxide. Under stress conditions, like hypoxia and anoxia, it also protects cells against reactive oxygen species thanks to its pseudoperoxidase activity. The chain is Myoglobin (MB) from Gorilla gorilla beringei (Mountain gorilla).